The sequence spans 797 residues: LPS-assembly protein LptD (797 aa).

A signal peptide spans 1-20; that stretch reads MHTIRCLILSALSVAGAAQA. The segment at 23 to 45 is disordered; the sequence is SQDAAPAGRQPVGSVASPGLEMP.

The protein belongs to the LptD family. In terms of assembly, component of the lipopolysaccharide transport and assembly complex. Interacts with LptE and LptA.

Its subcellular location is the cell outer membrane. In terms of biological role, together with LptE, is involved in the assembly of lipopolysaccharide (LPS) at the surface of the outer membrane. The polypeptide is LPS-assembly protein LptD (Bordetella avium (strain 197N)).